We begin with the raw amino-acid sequence, 117 residues long: Immunoglobulin lambda variable 1-47 (117 aa).

Positions 1 to 19 (MAGFPLLLTLLTHCAGSWA) are cleaved as a signal peptide. At glutamine 20 the chain carries Pyrrolidone carboxylic acid. The tract at residues 20–44 (QSVLTQPPSASGTPGQRVTISCSGS) is framework-1. The 98-residue stretch at 20-117 (QSVLTQPPSA…CAAWDDSLSG (98 aa)) folds into the Ig-like domain. Cysteine 41 and cysteine 108 form a disulfide bridge. A complementarity-determining-1 region spans residues 45 to 52 (SSNIGSNY). Residues 53-69 (VYWYQQLPGTAPKLLIY) form a framework-2 region. A complementarity-determining-2 region spans residues 70-72 (SNN). Positions 73 to 108 (QRPSGVPDRFSGSKSGTSASLAISGLRSEDEADYYC) are framework-3. The segment at 109-117 (AAWDDSLSG) is complementarity-determining-3.

In terms of assembly, immunoglobulins are composed of two identical heavy chains and two identical light chains; disulfide-linked.

Its subcellular location is the secreted. It localises to the cell membrane. In terms of biological role, v region of the variable domain of immunoglobulin light chains that participates in the antigen recognition. Immunoglobulins, also known as antibodies, are membrane-bound or secreted glycoproteins produced by B lymphocytes. In the recognition phase of humoral immunity, the membrane-bound immunoglobulins serve as receptors which, upon binding of a specific antigen, trigger the clonal expansion and differentiation of B lymphocytes into immunoglobulins-secreting plasma cells. Secreted immunoglobulins mediate the effector phase of humoral immunity, which results in the elimination of bound antigens. The antigen binding site is formed by the variable domain of one heavy chain, together with that of its associated light chain. Thus, each immunoglobulin has two antigen binding sites with remarkable affinity for a particular antigen. The variable domains are assembled by a process called V-(D)-J rearrangement and can then be subjected to somatic hypermutations which, after exposure to antigen and selection, allow affinity maturation for a particular antigen. The sequence is that of Immunoglobulin lambda variable 1-47 from Homo sapiens (Human).